An 846-amino-acid chain; its full sequence is Selenocysteine insertion sequence-binding protein 2 (846 aa).

2 stretches are compositionally biased toward basic and acidic residues: residues 151 to 165 (RRAW…RRAD) and 206 to 215 (PEFEFSRLDF). 5 disordered regions span residues 151-246 (RRAW…SNMS), 266-288 (TDHT…TREL), 321-440 (TTSS…VPVQ), 448-467 (AALE…RPVV), and 475-613 (VLSK…DSAT). Residue S220 is modified to Phosphoserine. Composition is skewed to polar residues over residues 220 to 232 (SPKN…TQKQ), 272 to 288 (AVTN…TREL), and 321 to 342 (TTSS…SDPS). The short motif at 370 to 380 (KKNKKKKEKSK) is the Nuclear localization signal element. The segment covering 417 to 428 (KLQSKQQAQNDF) has biased composition (polar residues). Residues 527–536 (ILKERQERMQ) are compositionally biased toward basic and acidic residues. The span at 542–551 (SAVSPTVASD) shows a compositional bias: polar residues. Positions 666-687 (LVLGLREVLKHLKLRKLKCIII) are RNA-binding. The segment at 774 to 804 (RQEQAGEPGPQTPPSPPMQDPIQSTDEGTLA) is disordered. Residues 783–792 (PQTPPSPPMQ) show a composition bias toward pro residues.

In terms of tissue distribution, ubiquitous.

The protein localises to the cytoplasm. It localises to the nucleus. In terms of biological role, mRNA-binding protein that binds to the SECIS (selenocysteine insertion sequence) element present in the 3'-UTR of mRNAs encoding selenoproteins and facilitates the incorporation of the rare amino acid selenocysteine. Insertion of selenocysteine at UGA codons is mediated by SECISBP2 and EEFSEC: SECISBP2 (1) specifically binds the SECIS sequence once the 80S ribosome encounters an in-frame UGA codon and (2) contacts the RPS27A/eS31 of the 40S ribosome before ribosome stalling. (3) GTP-bound EEFSEC then delivers selenocysteinyl-tRNA(Sec) to the 80S ribosome and adopts a preaccommodated state conformation. (4) After GTP hydrolysis, EEFSEC dissociates from the assembly, selenocysteinyl-tRNA(Sec) accommodates, and peptide bond synthesis and selenoprotein elongation occur. This Rattus norvegicus (Rat) protein is Selenocysteine insertion sequence-binding protein 2 (Secisbp2).